The primary structure comprises 438 residues: Alpha-methylserine aldolase (438 aa).

Lysine 252 carries the N6-(pyridoxal phosphate)lysine modification.

This sequence belongs to the SHMT family. Alpha-methylserine aldolase subfamily. Homodimer. Pyridoxal 5'-phosphate is required as a cofactor.

It catalyses the reaction 2-methyl-L-serine = formaldehyde + L-alanine. In the alpha-methyl-L-serine synthesis reaction, activity is inhibited by an excess amount of formaldehyde (at a concentration greater than 10 mM). In terms of biological role, catalyzes the reversible interconversion of alpha-methyl-L-serine to L-alanine and formaldehyde. Cannot use alpha-methyl-D-serine, L-serine or D-serine. Cannot use D-alanine instead of L-alanine as the substrate for alpha-methyl-L-serine synthesis. Does not require tetrahydrofolate (THF) for activity. The chain is Alpha-methylserine aldolase from Ralstonia sp.